The chain runs to 151 residues: uncharacterized protein (151 aa).

This is an uncharacterized protein from Methanocaldococcus jannaschii (strain ATCC 43067 / DSM 2661 / JAL-1 / JCM 10045 / NBRC 100440) (Methanococcus jannaschii).